Here is a 353-residue protein sequence, read N- to C-terminus: Sorbitol dehydrogenase (353 aa).

Zn(2+) is bound at residue cysteine 45. Residue tyrosine 51 coordinates substrate. The Zn(2+) site is built by histidine 70 and glutamate 71. Position 156 (glutamate 156) interacts with substrate. Residues valine 184, aspartate 204, arginine 209, 271 to 273, and 296 to 298 contribute to the NAD(+) site; these read VGL and IFR. 2 residues coordinate substrate: arginine 298 and tyrosine 299.

The protein belongs to the zinc-containing alcohol dehydrogenase family. In terms of assembly, homotetramer. Zn(2+) is required as a cofactor.

The enzyme catalyses keto-D-fructose + NADH + H(+) = D-sorbitol + NAD(+). The catalysed reaction is xylitol + NAD(+) = D-xylulose + NADH + H(+). It catalyses the reaction L-iditol + NAD(+) = keto-L-sorbose + NADH + H(+). In terms of biological role, polyol dehydrogenase that catalyzes the NAD(+)-dependent oxidation of various sugar alcohols. Is mostly active with D-sorbitol (D-glucitol), xylitol and L-iditol as substrates, leading to the C2-oxidized products D-fructose, D-xylulose and L-sorbose, respectively. This is Sorbitol dehydrogenase from Bacillus subtilis (strain 168).